A 343-amino-acid chain; its full sequence is Glucan endo-1,3-beta-glucosidase, acidic isoform GI9 (343 aa).

Residues 1 to 29 (MTLCIKNGFLAAALVLVGLLICSIQMIGA) form the signal peptide. Glutamine 30 is subject to Pyrrolidone carboxylic acid. Glutamate 124 functions as the Proton donor in the catalytic mechanism. Glutamate 264 (nucleophile) is an active-site residue.

This sequence belongs to the glycosyl hydrolase 17 family.

The protein localises to the secreted. Its subcellular location is the extracellular space. The catalysed reaction is Hydrolysis of (1-&gt;3)-beta-D-glucosidic linkages in (1-&gt;3)-beta-D-glucans.. Its function is as follows. Implicated in the defense of plants against pathogens. This is Glucan endo-1,3-beta-glucosidase, acidic isoform GI9 (PR2) from Nicotiana tabacum (Common tobacco).